A 360-amino-acid chain; its full sequence is Membrane-bound lytic murein transglycosylase C (360 aa).

A signal peptide spans 1–16 (MKKYLALALIAPLLVS). Cys-17 carries N-palmitoyl cysteine lipidation. The S-diacylglycerol cysteine moiety is linked to residue Cys-17.

It belongs to the transglycosylase Slt family.

The protein resides in the cell outer membrane. It catalyses the reaction Exolytic cleavage of the (1-&gt;4)-beta-glycosidic linkage between N-acetylmuramic acid (MurNAc) and N-acetylglucosamine (GlcNAc) residues in peptidoglycan, from either the reducing or the non-reducing ends of the peptidoglycan chains, with concomitant formation of a 1,6-anhydrobond in the MurNAc residue.. Its function is as follows. Murein-degrading enzyme. May play a role in recycling of muropeptides during cell elongation and/or cell division. In Klebsiella pneumoniae subsp. pneumoniae (strain ATCC 700721 / MGH 78578), this protein is Membrane-bound lytic murein transglycosylase C.